The sequence spans 70 residues: uncharacterized protein (70 aa).

This is an uncharacterized protein from Thermoproteus tenax virus 1 (strain KRA1) (TTV1).